Consider the following 193-residue polypeptide: uncharacterized protein (193 aa).

A run of 3 helical transmembrane segments spans residues 5–25 (LILL…FIIF), 63–83 (IFIL…LINI), and 90–110 (ILTF…LTPA).

It localises to the cell membrane. This is an uncharacterized protein from Methanocaldococcus jannaschii (strain ATCC 43067 / DSM 2661 / JAL-1 / JCM 10045 / NBRC 100440) (Methanococcus jannaschii).